The chain runs to 353 residues: Variable large protein 12 (353 aa).

A signal peptide spans 1–18 (MRKRISAIIMTLFMVLAS). Cys19 carries the N-palmitoyl cysteine lipid modification. Cys19 is lipidated: S-diacylglycerol cysteine.

Belongs to the variable large protein (Vlp) family. Beta subfamily.

The protein localises to the cell outer membrane. Its function is as follows. The Vlp and Vsp proteins are antigenically distinct proteins, only one vlp or vsp gene is transcriptionally active at any one time. Switching between these genes is a mechanism of host immune response evasion. In Borrelia hermsii, this protein is Variable large protein 12.